Here is a 430-residue protein sequence, read N- to C-terminus: Glutamate-1-semialdehyde 2,1-aminomutase (430 aa).

Lys-265 carries the N6-(pyridoxal phosphate)lysine modification.

Belongs to the class-III pyridoxal-phosphate-dependent aminotransferase family. HemL subfamily. In terms of assembly, homodimer. It depends on pyridoxal 5'-phosphate as a cofactor.

The protein resides in the cytoplasm. The catalysed reaction is (S)-4-amino-5-oxopentanoate = 5-aminolevulinate. It functions in the pathway porphyrin-containing compound metabolism; protoporphyrin-IX biosynthesis; 5-aminolevulinate from L-glutamyl-tRNA(Glu): step 2/2. The polypeptide is Glutamate-1-semialdehyde 2,1-aminomutase (Shewanella sp. (strain MR-4)).